The following is a 388-amino-acid chain: Processive diacylglycerol beta-glucosyltransferase (388 aa).

Belongs to the glycosyltransferase 28 family. UgtP subfamily.

Its subcellular location is the cell membrane. The enzyme catalyses a 1,2-diacyl-3-O-(beta-D-glucopyranosyl)-sn-glycerol + UDP-alpha-D-glucose = a 1,2-diacyl-3-O-(beta-D-Glc-(1-&gt;6)-beta-D-Glc)-sn-glycerol + UDP + H(+). It catalyses the reaction a 1,2-diacyl-3-O-(beta-D-Glc-(1-&gt;6)-beta-D-Glc)-sn-glycerol + UDP-alpha-D-glucose = a 1,2-diacyl-3-O-(beta-D-Glc-(1-&gt;6)-beta-D-Glc-(1-&gt;6)-beta-D-Glc)-sn-glycerol + UDP + H(+). It carries out the reaction a 1,2-diacyl-sn-glycerol + UDP-alpha-D-glucose = a 1,2-diacyl-3-O-(beta-D-glucopyranosyl)-sn-glycerol + UDP + H(+). It participates in glycolipid metabolism; diglucosyl-diacylglycerol biosynthesis. Its function is as follows. Processive glucosyltransferase involved in the biosynthesis of both the bilayer- and non-bilayer-forming membrane glucolipids. Is able to successively transfer up to three glucosyl residues to diacylglycerol (DAG), thereby catalyzing the formation of beta-monoglucosyl-DAG (3-O-(beta-D-glucopyranosyl)-1,2-diacyl-sn-glycerol), beta-diglucosyl-DAG (3-O-(beta-D-glucopyranosyl-beta-(1-&gt;6)-D-glucopyranosyl)-1,2-diacyl-sn-glycerol) and beta-triglucosyl-DAG (3-O-(beta-D-glucopyranosyl-beta-(1-&gt;6)-D-glucopyranosyl-beta-(1-&gt;6)-D-glucopyranosyl)-1,2-diacyl-sn-glycerol). Beta-diglucosyl-DAG is the predominant glycolipid found in Bacillales and is also used as a membrane anchor for lipoteichoic acid (LTA). This chain is Processive diacylglycerol beta-glucosyltransferase, found in Bacillus anthracis (strain A0248).